We begin with the raw amino-acid sequence, 467 residues long: Protection of telomeres protein 1a (467 aa).

The protein belongs to the telombin family. Component of the telomerase holoenzyme complex at least composed of TERT, CBF5 and POT1a. The RNA molecule associated to the telomerase complex, and providing a template for telomeric DNA synthesis, is most likely TR and not TER1 as described previously. Interacts with the N-terminal part of TERT. Interacts with CBF5. Interacts with CTC1 and STN1. Does not interact with TEN1. Expressed in roots, rosette leaves, cauline leaves, stems and flowers.

The protein resides in the nucleus. It is found in the chromosome. The protein localises to the telomere. It localises to the nucleolus. Its subcellular location is the cytoplasm. Functionally, component of the telomerase ribonucleoprotein (RNP) complex that is essential for the positive regulation of telomere length. Binds RNA non-specifically. Binds specifically single-stranded telomeric DNA. Not required to recruit telomerase to telomeres, but stimulates TER1 RNP repeat addition processivity. This Arabidopsis thaliana (Mouse-ear cress) protein is Protection of telomeres protein 1a.